The sequence spans 572 residues: MRTSQYLLSTLKETPADAEVISHQLMLRAGMIRKLASGLYTWLPTGVRVLKKVENIVREEMNNAGAIEVSMPVVQPADLWQESGRWEQYGPELLRFVDRGERPFVLGPTHEEVITDLIRGEINSYKQLPLNFFQIQTKFRDEVRPRFGVMRAREFLMKDAYSFHTTQESLQETYDAMYAAYSKIFERMDLNFRAVLADTGSIGGSASHEFQVLADSGEDDIVFSTESDYAANIEFAEALAPSAPRAVATEDLRIIDTPNAKTIAELVEQFNLPIEKTVKTLMVHAHEESGHKLVALLVRGDHELNEIKAEKLPQVAKPLTFATEEEIRAIIGAGPGSLGPVNLPLPVVVDRSVAVMSDFGAGANIDGKHYFGINWERDLPLPQVADLRNVVEGDISPDGKGTLQIKRGIEVGHIFQLGTKYSEAMKATVQGEDGRNQVMTMGCYGIGVSRVVAAAIEQNHDERGIIWPDAIAPFQVAILPMNMHKSFRVQALAEELYATLRSHGIDVILDDRKERPGVMFADMELIGVPHNIVIGDRNLDSEEVEYKNRRAGEKQMIKTSEIIDFLLSQIKR.

The protein belongs to the class-II aminoacyl-tRNA synthetase family. ProS type 1 subfamily. As to quaternary structure, homodimer.

The protein resides in the cytoplasm. It catalyses the reaction tRNA(Pro) + L-proline + ATP = L-prolyl-tRNA(Pro) + AMP + diphosphate. Catalyzes the attachment of proline to tRNA(Pro) in a two-step reaction: proline is first activated by ATP to form Pro-AMP and then transferred to the acceptor end of tRNA(Pro). As ProRS can inadvertently accommodate and process non-cognate amino acids such as alanine and cysteine, to avoid such errors it has two additional distinct editing activities against alanine. One activity is designated as 'pretransfer' editing and involves the tRNA(Pro)-independent hydrolysis of activated Ala-AMP. The other activity is designated 'posttransfer' editing and involves deacylation of mischarged Ala-tRNA(Pro). The misacylated Cys-tRNA(Pro) is not edited by ProRS. The sequence is that of Proline--tRNA ligase from Yersinia enterocolitica serotype O:8 / biotype 1B (strain NCTC 13174 / 8081).